Here is a 191-residue protein sequence, read N- to C-terminus: D-glycero-beta-D-manno-heptose-1,7-bisphosphate 7-phosphatase (191 aa).

Catalysis depends on Asp-11, which acts as the Nucleophile. 2 residues coordinate Mg(2+): Asp-11 and Asp-13. Substrate is bound by residues 11–13 (DRD), 19–22 (DHGY), and 53–56 (TNQS). Catalysis depends on Asp-13, which acts as the Proton donor. 4 residues coordinate Zn(2+): Cys-92, His-94, Cys-107, and Cys-109. A substrate-binding site is contributed by 110-111 (RK). Mg(2+) contacts are provided by Asp-136 and Lys-137. Residue Lys-137 coordinates substrate.

The protein belongs to the GmhB family. In terms of assembly, monomer. It depends on Mg(2+) as a cofactor. Requires Zn(2+) as cofactor.

It is found in the cytoplasm. It catalyses the reaction D-glycero-beta-D-manno-heptose 1,7-bisphosphate + H2O = D-glycero-beta-D-manno-heptose 1-phosphate + phosphate. It functions in the pathway nucleotide-sugar biosynthesis; ADP-L-glycero-beta-D-manno-heptose biosynthesis; ADP-L-glycero-beta-D-manno-heptose from D-glycero-beta-D-manno-heptose 7-phosphate: step 2/4. The protein operates within bacterial outer membrane biogenesis; LPS core biosynthesis. Functionally, converts the D-glycero-beta-D-manno-heptose 1,7-bisphosphate intermediate into D-glycero-beta-D-manno-heptose 1-phosphate by removing the phosphate group at the C-7 position. This chain is D-glycero-beta-D-manno-heptose-1,7-bisphosphate 7-phosphatase (gmhB), found in Escherichia coli O157:H7.